The primary structure comprises 429 residues: Phosphoribosylamine--glycine ligase (429 aa).

The ATP-grasp domain occupies 108 to 315; the sequence is KDFLARHRIP…LVLLVEAALA (208 aa). 134 to 195 contributes to the ATP binding site; the sequence is LHEQGAPIVI…EEFLDGEEAS (62 aa). Residues Glu285 and Asn287 each coordinate Mg(2+).

This sequence belongs to the GARS family. Requires Mg(2+) as cofactor. Mn(2+) serves as cofactor.

It catalyses the reaction 5-phospho-beta-D-ribosylamine + glycine + ATP = N(1)-(5-phospho-beta-D-ribosyl)glycinamide + ADP + phosphate + H(+). It functions in the pathway purine metabolism; IMP biosynthesis via de novo pathway; N(1)-(5-phospho-D-ribosyl)glycinamide from 5-phospho-alpha-D-ribose 1-diphosphate: step 2/2. This Pseudomonas aeruginosa (strain ATCC 15692 / DSM 22644 / CIP 104116 / JCM 14847 / LMG 12228 / 1C / PRS 101 / PAO1) protein is Phosphoribosylamine--glycine ligase.